A 328-amino-acid chain; its full sequence is Tetraacyldisaccharide 4'-kinase (328 aa).

55-62 (TVGGNGKT) lines the ATP pocket.

The protein belongs to the LpxK family.

It catalyses the reaction a lipid A disaccharide + ATP = a lipid IVA + ADP + H(+). It functions in the pathway glycolipid biosynthesis; lipid IV(A) biosynthesis; lipid IV(A) from (3R)-3-hydroxytetradecanoyl-[acyl-carrier-protein] and UDP-N-acetyl-alpha-D-glucosamine: step 6/6. Functionally, transfers the gamma-phosphate of ATP to the 4'-position of a tetraacyldisaccharide 1-phosphate intermediate (termed DS-1-P) to form tetraacyldisaccharide 1,4'-bis-phosphate (lipid IVA). The protein is Tetraacyldisaccharide 4'-kinase of Hamiltonella defensa subsp. Acyrthosiphon pisum (strain 5AT).